The following is a 447-amino-acid chain: UPF0210 protein OEOE_0945 (447 aa).

Belongs to the UPF0210 family. As to quaternary structure, homodimer.

This is UPF0210 protein OEOE_0945 from Oenococcus oeni (strain ATCC BAA-331 / PSU-1).